Here is a 147-residue protein sequence, read N- to C-terminus: PTPN13-like protein, Y-linked (147 aa).

In terms of tissue distribution, expressed in testis. Detected in spermatocytes, spermatids and spermatozoa (at protein level).

The chain is PTPN13-like protein, Y-linked (PRY) from Homo sapiens (Human).